The sequence spans 331 residues: DNA-directed RNA polymerase subunit alpha (331 aa).

The segment at 1 to 237 (MQSSVTEFLI…NQLESFVYLR (237 aa)) is alpha N-terminal domain (alpha-NTD). Positions 251 to 331 (FDPILLRPVD…NWPPDNILDN (81 aa)) are alpha C-terminal domain (alpha-CTD).

It belongs to the RNA polymerase alpha chain family. As to quaternary structure, homodimer. The RNAP catalytic core consists of 2 alpha, 1 beta, 1 beta' and 1 omega subunit. When a sigma factor is associated with the core the holoenzyme is formed, which can initiate transcription.

It carries out the reaction RNA(n) + a ribonucleoside 5'-triphosphate = RNA(n+1) + diphosphate. Functionally, DNA-dependent RNA polymerase catalyzes the transcription of DNA into RNA using the four ribonucleoside triphosphates as substrates. The protein is DNA-directed RNA polymerase subunit alpha of Buchnera aphidicola subsp. Baizongia pistaciae (strain Bp).